The chain runs to 39 residues: Omega-actinopoditoxin-Mb1a (39 aa).

3 disulfide bridges follow: cysteine 4-cysteine 19, cysteine 11-cysteine 30, and cysteine 18-cysteine 38.

Contains 3 disulfide bonds. In terms of tissue distribution, expressed by the venom gland.

The protein localises to the secreted. In terms of biological role, potent inhibitor of insect, but not mammalian, voltage-gated calcium channels (Cav). The sequence is that of Omega-actinopoditoxin-Mb1a from Missulena bradleyi (Eastern mouse spider).